Reading from the N-terminus, the 389-residue chain is Chalcone synthase 2 (389 aa).

Cys-164 is a catalytic residue.

The protein belongs to the thiolase-like superfamily. Chalcone/stilbene synthases family.

The enzyme catalyses (E)-4-coumaroyl-CoA + 3 malonyl-CoA + 3 H(+) = 2',4,4',6'-tetrahydroxychalcone + 3 CO2 + 4 CoA. The protein operates within secondary metabolite biosynthesis; flavonoid biosynthesis. In terms of biological role, the primary product of this enzyme is 4,2',4',6'-tetrahydroxychalcone (also termed naringenin-chalcone or chalcone) which can under specific conditions spontaneously isomerize into naringenin. This Solanum lycopersicum (Tomato) protein is Chalcone synthase 2 (CHS2).